A 258-amino-acid polypeptide reads, in one-letter code: Synapse differentiation-inducing gene protein 1 (258 aa).

The Cytoplasmic portion of the chain corresponds to methionine 1–histidine 181. Position 137 is a phosphoserine (serine 137). The helical transmembrane segment at leucine 182 to tyrosine 202 threads the bilayer. The Extracellular segment spans residues leucine 203–phenylalanine 228. An intramembrane region (helical) is located at residues leucine 229–isoleucine 249. At alanine 250–leucine 258 the chain is on the extracellular side.

Belongs to the CD225/Dispanin family. Homodimer. Interacts with GRIA1 and GRIA2. In terms of tissue distribution, brain-specific. Expressed in Purkinje neurons in cerebellum. Also detected in the hippocampus. Found at excitatory synapses and postsynaptic cells.

The protein resides in the cell membrane. Its subcellular location is the early endosome membrane. It localises to the postsynaptic density membrane. It is found in the synapse. The protein localises to the cell projection. The protein resides in the dendrite. Its subcellular location is the dendritic spine. May regulate AMPA receptor content at nascent synapses, and have a role in postsynaptic development and maturation. In Mus musculus (Mouse), this protein is Synapse differentiation-inducing gene protein 1 (Syndig1).